A 241-amino-acid polypeptide reads, in one-letter code: Ubiquinone biosynthesis O-methyltransferase (241 aa).

S-adenosyl-L-methionine-binding residues include Arg-46, Gly-66, Asp-87, and Met-131.

This sequence belongs to the methyltransferase superfamily. UbiG/COQ3 family.

The enzyme catalyses a 3-demethylubiquinol + S-adenosyl-L-methionine = a ubiquinol + S-adenosyl-L-homocysteine + H(+). The catalysed reaction is a 3-(all-trans-polyprenyl)benzene-1,2-diol + S-adenosyl-L-methionine = a 2-methoxy-6-(all-trans-polyprenyl)phenol + S-adenosyl-L-homocysteine + H(+). It participates in cofactor biosynthesis; ubiquinone biosynthesis. O-methyltransferase that catalyzes the 2 O-methylation steps in the ubiquinone biosynthetic pathway. The polypeptide is Ubiquinone biosynthesis O-methyltransferase (Bordetella pertussis (strain Tohama I / ATCC BAA-589 / NCTC 13251)).